The sequence spans 322 residues: MKEACSSSSHVPVSDSKYILKSELLSLLKTYNCYHEGRSFQLRHREEEGTLIIEGLLNIAWGLRRPIRLQMQDDRERVHLPSATWVPERLSYLQKEASPQDSKVPTEEPGTQPANKAEVSGDSSGALEGEEEEVPQLMRTKSDASCIIQRRSKSRAPSEAQKIRRHRFSINGHFYNHKTSVFTPAYGSVTNVRVNSTMTTQQVLTLLLNKFRVEDGPSEFALYTVHESGEQTKLKDCEYPLISRILHGPCEKIVKIFLMEADLSEEVPHDVAQYIKFEMPVLDSFVEKLKEEEEREIIKLTMKFQALRLTMLQRLEQLVEAK.

Residues 96-161 (EASPQDSKVP…SKSRAPSEAQ (66 aa)) form a disordered region. The residue at position 142 (Ser142) is a Phosphoserine. Residues 175 to 264 (YNHKTSVFTP…KIFLMEADLS (90 aa)) form the Ras-associating domain. Residues 271–318 (VAQYIKFEMPVLDSFVEKLKEEEEREIIKLTMKFQALRLTMLQRLEQL) form the SARAH domain.

As to quaternary structure, interacts directly with activated KRAS in a GTP-dependent manner.

Potential tumor suppressor. May act as a KRAS effector protein. May promote apoptosis and cell cycle arrest. In Mus musculus (Mouse), this protein is Ras association domain-containing protein 4 (Rassf4).